The primary structure comprises 596 residues: Elongation factor 4 (596 aa).

Positions 2-184 constitute a tr-type G domain; sequence KHIRNFSIIA…MIVKDVPPPV (183 aa). Residues 14–19 and 131–134 each bind GTP; these read DHGKST and NKID.

Belongs to the TRAFAC class translation factor GTPase superfamily. Classic translation factor GTPase family. LepA subfamily.

The protein resides in the cell inner membrane. It catalyses the reaction GTP + H2O = GDP + phosphate + H(+). Required for accurate and efficient protein synthesis under certain stress conditions. May act as a fidelity factor of the translation reaction, by catalyzing a one-codon backward translocation of tRNAs on improperly translocated ribosomes. Back-translocation proceeds from a post-translocation (POST) complex to a pre-translocation (PRE) complex, thus giving elongation factor G a second chance to translocate the tRNAs correctly. Binds to ribosomes in a GTP-dependent manner. The polypeptide is Elongation factor 4 (Pseudoalteromonas translucida (strain TAC 125)).